The following is a 701-amino-acid chain: uncharacterized protein (701 aa).

This is an uncharacterized protein from Saccharomyces cerevisiae (strain ATCC 204508 / S288c) (Baker's yeast).